A 447-amino-acid chain; its full sequence is MSTMTPAEIVSELDKHIIGQAKAKKAVAVALRNRWRRQQVADPLRQEITPKNILMIGPTGVGKTEIARRLAKLADAPFIKIEATKFTEVGYVGRDVDSIVRDLIEISVKQTRETEMRKVRSKATDQAEDRILDILLPQPRAVGFGGNAEHANDDNNATRQTFRKRLREGQLDDKEVELDIEQPSAGMDIMAPPGMEEMTEQIRSMFSNLGSGKKQRRKVKIKEALKLLTDEEAAKMLNDEEVKTKAVQNVEQNGIVFLDEIDKITSRNNEGSGGEVSRQGVQRDLLPLVEGTTVNTKYGMVKTDHILFIASGAFHLAKPSDLIPELQGRFPIRVELDSLSVNDFEAILVATDASLVKQYQALLATEDVQLEFADDGIRRLAEIAYSVNEKTENIGARRLYTVIEKLLEEVSFSAGNHAGERVTIDAKYVDRALGEVSQDEDLSRYVL.

Residues Ile18, 60 to 65 (GVGKTE), Asp259, Glu325, and Arg397 contribute to the ATP site.

The protein belongs to the ClpX chaperone family. HslU subfamily. A double ring-shaped homohexamer of HslV is capped on each side by a ring-shaped HslU homohexamer. The assembly of the HslU/HslV complex is dependent on binding of ATP.

The protein resides in the cytoplasm. ATPase subunit of a proteasome-like degradation complex; this subunit has chaperone activity. The binding of ATP and its subsequent hydrolysis by HslU are essential for unfolding of protein substrates subsequently hydrolyzed by HslV. HslU recognizes the N-terminal part of its protein substrates and unfolds these before they are guided to HslV for hydrolysis. This Burkholderia lata (strain ATCC 17760 / DSM 23089 / LMG 22485 / NCIMB 9086 / R18194 / 383) protein is ATP-dependent protease ATPase subunit HslU.